The following is a 47-amino-acid chain: Lysis protein for colicin E9 (47 aa).

Residues 1–19 form the signal peptide; sequence MKKITGIILLLLAAIILAA. Cys20 carries the N-palmitoyl cysteine lipid modification. A lipid anchor (S-diacylglycerol cysteine) is attached at Cys20.

Its subcellular location is the cell outer membrane. In terms of biological role, lysis proteins are required for both colicin release and partial cell lysis. The chain is Lysis protein for colicin E9 (lys) from Escherichia coli.